The chain runs to 465 residues: uncharacterized protein (465 aa).

The helical transmembrane segment at 56–76 (ILYMIIFAIFGLLPFLIALIF) threads the bilayer. The segment at 177-198 (KFNKSKKSNKINDKTPILNNNN) is disordered. A helical transmembrane segment spans residues 273 to 293 (LIFLLVSTILLIALIGFILII). The disordered stretch occupies residues 411–449 (NNYNNSNNNNNSNNSNSNNNNNNNNNNNNYNNNNYNNNN).

The protein resides in the membrane. This is an uncharacterized protein from Dictyostelium discoideum (Social amoeba).